The following is a 204-amino-acid chain: CASP-like protein 2A1 (204 aa).

A compositionally biased stretch (basic and acidic residues) spans methionine 1–serine 11. A disordered region spans residues methionine 1–glutamate 25. Topologically, residues methionine 1–threonine 32 are cytoplasmic. A helical transmembrane segment spans residues alanine 33–leucine 53. The Extracellular segment spans residues lysine 54–tyrosine 74. The N-linked (GlcNAc...) asparagine glycan is linked to asparagine 68. The chain crosses the membrane as a helical span at residues leucine 75–methionine 95. At proline 96–glutamine 113 the chain is on the cytoplasmic side. A helical membrane pass occupies residues leucine 114–tyrosine 134. Residues asparagine 135–arginine 155 lie on the Extracellular side of the membrane. The helical transmembrane segment at alanine 156–isoleucine 176 threads the bilayer. Residues serine 177–serine 204 are Cytoplasmic-facing.

The protein belongs to the Casparian strip membrane proteins (CASP) family. As to quaternary structure, homodimer and heterodimers.

It localises to the cell membrane. The protein is CASP-like protein 2A1 of Arabidopsis lyrata subsp. lyrata (Lyre-leaved rock-cress).